A 155-amino-acid polypeptide reads, in one-letter code: Gene 27 protein (155 aa).

Residues Lys-41 to Asn-114 form a disordered region. 2 stretches are compositionally biased toward basic and acidic residues: residues Lys-55–Thr-68 and Thr-78–Ala-95.

Its function is as follows. Required for late gene transcription and DNA replication. This chain is Gene 27 protein (27), found in Bacillus subtilis (Bacteriophage SP01).